We begin with the raw amino-acid sequence, 52 residues long: Venom peptide 4a (52 aa).

The first 23 residues, 1–23, serve as a signal peptide directing secretion; it reads MRSAILLVIVAIVAILGFLGVNA. AXPX repeat units follow at residues 23 to 26, 31 to 34, and 39 to 42; these read AEPL, AEPN, and AAPL. Residues 24–41 constitute a propeptide that is removed on maturation; that stretch reads EPLPSPLAEPNPHAKAAP. Ala51 bears the Alanine amide mark.

As to expression, expressed by the venom gland.

It is found in the secreted. This chain is Venom peptide 4a, found in Eumenes pomiformis (Potter wasp).